The sequence spans 89 residues: Small ribosomal subunit protein bS20 (89 aa).

Residues 1 to 10 (MKNRSAIKRH) show a composition bias toward basic residues. The interval 1-30 (MKNRSAIKRHNQSEVRRMRNRSAKSEVRTT) is disordered. Over residues 11 to 30 (NQSEVRRMRNRSAKSEVRTT) the composition is skewed to basic and acidic residues.

It belongs to the bacterial ribosomal protein bS20 family.

Functionally, binds directly to 16S ribosomal RNA. The polypeptide is Small ribosomal subunit protein bS20 (Treponema denticola (strain ATCC 35405 / DSM 14222 / CIP 103919 / JCM 8153 / KCTC 15104)).